Consider the following 160-residue polypeptide: Troponin C, skeletal muscle (160 aa).

The residue at position 2 (threonine 2) is an N-acetylthreonine. EF-hand domains lie at 15–50 (EMIAEFKAAFDMFDADGGGDISVKELGTVMRMLGQT), 51–86 (PTKEELDAIIEEVDEDGSGTIDFEEFLVMMVRQMKE), 91–126 (KSEEELAECFRIFDRNADGYIDAEELAEIFRASGEH), and 127–160 (VTDEEIESLMKDGDKNNDGRIDFDEFLKMMEGVQ). The Ca(2+) site is built by aspartate 28, aspartate 30, aspartate 34, glutamate 39, aspartate 64, aspartate 66, serine 68, threonine 70, glutamate 75, aspartate 104, asparagine 106, aspartate 108, tyrosine 110, glutamate 115, aspartate 140, asparagine 142, aspartate 144, arginine 146, and glutamate 151.

It belongs to the troponin C family.

Functionally, troponin is the central regulatory protein of striated muscle contraction. Tn consists of three components: Tn-I which is the inhibitor of actomyosin ATPase, Tn-T which contains the binding site for tropomyosin and Tn-C. The binding of calcium to Tn-C abolishes the inhibitory action of Tn on actin filaments. The protein is Troponin C, skeletal muscle (TNNC2) of Oryctolagus cuniculus (Rabbit).